A 66-amino-acid polypeptide reads, in one-letter code: DNA-directed RNA polymerase subunit Rpo10 (66 aa).

Positions 7, 10, 44, and 45 each coordinate Zn(2+).

The protein belongs to the archaeal Rpo10/eukaryotic RPB10 RNA polymerase subunit family. As to quaternary structure, part of the RNA polymerase complex. Requires Zn(2+) as cofactor.

It is found in the cytoplasm. The enzyme catalyses RNA(n) + a ribonucleoside 5'-triphosphate = RNA(n+1) + diphosphate. DNA-dependent RNA polymerase (RNAP) catalyzes the transcription of DNA into RNA using the four ribonucleoside triphosphates as substrates. The sequence is that of DNA-directed RNA polymerase subunit Rpo10 from Sulfurisphaera tokodaii (strain DSM 16993 / JCM 10545 / NBRC 100140 / 7) (Sulfolobus tokodaii).